A 375-amino-acid polypeptide reads, in one-letter code: Odorant receptor 49b (375 aa).

The Cytoplasmic segment spans residues 1-28 (MFEDIQLIYMNIKILRFWALLYDKNLRR). The chain crosses the membrane as a helical span at residues 29 to 49 (YVCIGLASFHIFTQIVYMMST). Over 50–60 (NEGLTGIIRNS) the chain is Extracellular. A helical transmembrane segment spans residues 61–77 (YMLVLWINTVLRAYLLL). At 78 to 121 (ADHDRYLALIQKLTEAYYDLLNLNDSYISEILDQVNKVGKLMAR) the chain is on the cytoplasmic side. The helical transmembrane segment at 122–142 (GNLFFGMLTSMGFGLYPLSSS) threads the bilayer. Over 143–176 (ERVLPFGSKIPGLNEYESPYYEMWYIFQMLITPM) the chain is Extracellular. Residues 177-197 (GCCMYIPYTSLIVGLIMFGIV) traverse the membrane as a helical segment. The Cytoplasmic segment spans residues 198 to 251 (RCKALQHRLRQVALKHPYGDRDPRELREEIIACIRYQQSIIEYMDHINELTTMM). A helical membrane pass occupies residues 252-272 (FLFELMAFSALLCALLFMLII). Over 273 to 278 (VSGTSQ) the chain is Extracellular. A helical transmembrane segment spans residues 279–299 (LIIVCMYINMILAQILALYWY). Residues 300–342 (ANELREQNLAVATAAYETEWFTFDVPLRKNILFMMMRAQRPAA) are Cytoplasmic-facing. The chain crosses the membrane as a helical span at residues 343-363 (ILLGNIRPITLELFQNLLNTT). Topologically, residues 364 to 375 (YTFFTVLKRVYG) are extracellular.

This sequence belongs to the insect chemoreceptor superfamily. Heteromeric odorant receptor channel (TC 1.A.69) family. Or30a subfamily. In terms of assembly, interacts with Orco. Complexes exist early in the endomembrane system in olfactory sensory neurons (OSNs), coupling these complexes to the conserved ciliary trafficking pathway. As to expression, expressed in olfactory sensory neurons in the antenna.

It is found in the cell membrane. Odorant receptor which mediates acceptance or avoidance behavior, depending on its substrates. The odorant receptor repertoire encodes a large collection of odor stimuli that vary widely in identity, intensity, and duration. May form a complex with Orco to form odorant-sensing units, providing sensitive and prolonged odorant signaling and calcium permeability. The chain is Odorant receptor 49b (Or49b) from Drosophila melanogaster (Fruit fly).